Consider the following 285-residue polypeptide: Polyamine aminopropyltransferase (285 aa).

The PABS domain maps to D5–K241. Q35 contacts S-methyl-5'-thioadenosine. The spermidine site is built by H66 and D90. Residues D110 and D141 to G142 contribute to the S-methyl-5'-thioadenosine site. D160 acts as the Proton acceptor in catalysis. D160–D163 serves as a coordination point for spermidine. An S-methyl-5'-thioadenosine-binding site is contributed by P167.

This sequence belongs to the spermidine/spermine synthase family. In terms of assembly, homodimer or homotetramer.

The protein localises to the cytoplasm. The catalysed reaction is S-adenosyl 3-(methylsulfanyl)propylamine + putrescine = S-methyl-5'-thioadenosine + spermidine + H(+). It functions in the pathway amine and polyamine biosynthesis; spermidine biosynthesis; spermidine from putrescine: step 1/1. In terms of biological role, catalyzes the irreversible transfer of a propylamine group from the amino donor S-adenosylmethioninamine (decarboxy-AdoMet) to putrescine (1,4-diaminobutane) to yield spermidine. The polypeptide is Polyamine aminopropyltransferase (Xylella fastidiosa (strain M12)).